Consider the following 96-residue polypeptide: Small ribosomal subunit protein bS6 (96 aa).

It belongs to the bacterial ribosomal protein bS6 family.

In terms of biological role, binds together with bS18 to 16S ribosomal RNA. The chain is Small ribosomal subunit protein bS6 from Heliobacterium modesticaldum (strain ATCC 51547 / Ice1).